The primary structure comprises 428 residues: Protein clpf-1 (428 aa).

ATP is bound by residues Glu-16 and Arg-56. Positions 99-118 are disordered; sequence KKREEQAVSNSSKPKGPRLL. 124-129 is an ATP binding site; the sequence is DVGKTT.

The protein belongs to the Clp1 family. Clp1 subfamily.

The protein localises to the nucleus. Functionally, required for endonucleolytic cleavage during polyadenylation-dependent pre-mRNA 3'-end formation. This is Protein clpf-1 from Caenorhabditis briggsae.